Here is a 131-residue protein sequence, read N- to C-terminus: DNA-directed RNA polymerase subunit Rpo8 (131 aa).

This sequence belongs to the archaeal Rpo8 RNA polymerase subunit family. Part of the 13-subunit RNA polymerase complex. Interacts with Rpo1N on the periphery of the clamp head.

It is found in the cytoplasm. It carries out the reaction RNA(n) + a ribonucleoside 5'-triphosphate = RNA(n+1) + diphosphate. Functionally, DNA-dependent RNA polymerase (RNAP) catalyzes the transcription of DNA into RNA using the four ribonucleoside triphosphates as substrates. This Saccharolobus shibatae (strain ATCC 51178 / DSM 5389 / JCM 8931 / NBRC 15437 / B12) (Sulfolobus shibatae) protein is DNA-directed RNA polymerase subunit Rpo8.